Here is a 503-residue protein sequence, read N- to C-terminus: Cobyric acid synthase (503 aa).

The GATase cobBQ-type domain occupies 251-450 (DLDIAVIRLP…IHGIFENAAF (200 aa)). Cysteine 331 acts as the Nucleophile in catalysis. Residue histidine 442 is part of the active site.

Belongs to the CobB/CobQ family. CobQ subfamily.

The protein operates within cofactor biosynthesis; adenosylcobalamin biosynthesis. Its function is as follows. Catalyzes amidations at positions B, D, E, and G on adenosylcobyrinic A,C-diamide. NH(2) groups are provided by glutamine, and one molecule of ATP is hydrogenolyzed for each amidation. The polypeptide is Cobyric acid synthase (Dehalococcoides mccartyi (strain ATCC BAA-2100 / JCM 16839 / KCTC 5957 / BAV1)).